Here is a 102-residue protein sequence, read N- to C-terminus: NADH-quinone oxidoreductase subunit K (102 aa).

3 helical membrane-spanning segments follow: residues 5–25 (LAHY…GIFL), 31–51 (IILL…FVAF), and 62–82 (VFVF…LAIL).

This sequence belongs to the complex I subunit 4L family. As to quaternary structure, NDH-1 is composed of 14 different subunits. Subunits NuoA, H, J, K, L, M, N constitute the membrane sector of the complex.

The protein resides in the cell inner membrane. The enzyme catalyses a quinone + NADH + 5 H(+)(in) = a quinol + NAD(+) + 4 H(+)(out). NDH-1 shuttles electrons from NADH, via FMN and iron-sulfur (Fe-S) centers, to quinones in the respiratory chain. The immediate electron acceptor for the enzyme in this species is believed to be ubiquinone. Couples the redox reaction to proton translocation (for every two electrons transferred, four hydrogen ions are translocated across the cytoplasmic membrane), and thus conserves the redox energy in a proton gradient. The polypeptide is NADH-quinone oxidoreductase subunit K (Bordetella avium (strain 197N)).